We begin with the raw amino-acid sequence, 309 residues long: Aspartate carbamoyltransferase catalytic subunit (309 aa).

Carbamoyl phosphate contacts are provided by arginine 49 and threonine 50. Residue lysine 77 participates in L-aspartate binding. Positions 99, 127, and 130 each coordinate carbamoyl phosphate. Arginine 160 and arginine 211 together coordinate L-aspartate. Carbamoyl phosphate is bound by residues alanine 252 and proline 253.

Belongs to the aspartate/ornithine carbamoyltransferase superfamily. ATCase family. As to quaternary structure, heterododecamer (2C3:3R2) of six catalytic PyrB chains organized as two trimers (C3), and six regulatory PyrI chains organized as three dimers (R2).

It carries out the reaction carbamoyl phosphate + L-aspartate = N-carbamoyl-L-aspartate + phosphate + H(+). It functions in the pathway pyrimidine metabolism; UMP biosynthesis via de novo pathway; (S)-dihydroorotate from bicarbonate: step 2/3. In terms of biological role, catalyzes the condensation of carbamoyl phosphate and aspartate to form carbamoyl aspartate and inorganic phosphate, the committed step in the de novo pyrimidine nucleotide biosynthesis pathway. This is Aspartate carbamoyltransferase catalytic subunit from Geobacillus sp. (strain WCH70).